The primary structure comprises 546 residues: Chaperonin GroEL (546 aa).

Residues 30–33 (TLGP), Lys-51, 87–91 (DGTTT), Gly-415, 479–481 (NAA), and Asp-495 each bind ATP. Residues 526–546 (KKGDSAPAGGGMGDMGGMGMM) form a disordered region. Residues 533 to 546 (AGGGMGDMGGMGMM) show a composition bias toward gly residues.

Belongs to the chaperonin (HSP60) family. As to quaternary structure, forms a cylinder of 14 subunits composed of two heptameric rings stacked back-to-back. Interacts with the co-chaperonin GroES.

The protein resides in the cytoplasm. The catalysed reaction is ATP + H2O + a folded polypeptide = ADP + phosphate + an unfolded polypeptide.. Together with its co-chaperonin GroES, plays an essential role in assisting protein folding. The GroEL-GroES system forms a nano-cage that allows encapsulation of the non-native substrate proteins and provides a physical environment optimized to promote and accelerate protein folding. The protein is Chaperonin GroEL of Thioalkalivibrio sulfidiphilus (strain HL-EbGR7).